A 195-amino-acid chain; its full sequence is uncharacterized protein (195 aa).

An HTH tetR-type domain is found at 6–66 (VESRKRLLKA…ELITDFHSRV (61 aa)). A DNA-binding region (H-T-H motif) is located at residues 29–48 (KVSEIVKKAGFTQPSFYLYF).

This is an uncharacterized protein from Bacillus subtilis (strain 168).